Reading from the N-terminus, the 196-residue chain is MSRYRGPRFKKIRRLGALPGLTSKRPRSGSDLKNPLRSGKRSQYRIRLEEKQKLRFHYGLTERQLLRYVHIARKAKGSTGQVLLQLLEMRLDNILFRLGMASTIPGARQLVNHRHILVNGRIVDIPSYRCKPRDIITTKDKQRSKALIQNSIASAPREELPNHLTIDSFQYKGLVNQIIDSKWIGLKINELLVVEY.

The tract at residues Leu15–Arg41 is disordered. An S4 RNA-binding domain is found at Met89–Asn150.

It belongs to the universal ribosomal protein uS4 family. As to quaternary structure, part of the 30S ribosomal subunit. Contacts protein S5. The interaction surface between S4 and S5 is involved in control of translational fidelity.

It localises to the plastid. Its subcellular location is the chloroplast. Its function is as follows. One of the primary rRNA binding proteins, it binds directly to 16S rRNA where it nucleates assembly of the body of the 30S subunit. In terms of biological role, with S5 and S12 plays an important role in translational accuracy. The polypeptide is Small ribosomal subunit protein uS4c (rps4) (Narcissus odorus (Campernelle jonquil)).